The following is a 239-amino-acid chain: Sugar fermentation stimulation protein homolog (239 aa).

The protein belongs to the SfsA family.

In Microcystis aeruginosa (strain NIES-843 / IAM M-2473), this protein is Sugar fermentation stimulation protein homolog.